The sequence spans 476 residues: UDP-N-acetylmuramate--L-alanine ligase (476 aa).

125-131 (GTHGKTT) provides a ligand contact to ATP.

The protein belongs to the MurCDEF family.

It localises to the cytoplasm. The catalysed reaction is UDP-N-acetyl-alpha-D-muramate + L-alanine + ATP = UDP-N-acetyl-alpha-D-muramoyl-L-alanine + ADP + phosphate + H(+). It functions in the pathway cell wall biogenesis; peptidoglycan biosynthesis. In terms of biological role, cell wall formation. This Histophilus somni (strain 129Pt) (Haemophilus somnus) protein is UDP-N-acetylmuramate--L-alanine ligase.